The following is a 1025-amino-acid chain: Adenylate-forming reductase 03009 (1025 aa).

The segment at 38-422 (FEFHAKSNPQ…LGRIDNQVKI (385 aa)) is adenylation (A) domain. AMP contacts are provided by residues 332-333 (VT) and 412-415 (HLGR). The thiolation and peptide carrier (T) domain stretch occupies residues 556–638 (SLGSTNTKIS…AILIWICVKK (83 aa)). A thioester reductase (TR) domain region spans residues 682–900 (FIRRTAARVY…PPTKLWVKGV (219 aa)). Residues 685–688 (RTAA), 769–771 (SAL), and tyrosine 840 contribute to the NADP(+) site.

This sequence belongs to the adenylate-forming reductase family.

Adenylate-forming reductase, a natural product biosynthesis enzyme that resembles non-ribosomal peptide synthetases, yet serves to modify one substrate, rather than to condense two or more building blocks. The A-domain preferentially accepts L-serine, L-alanine and L-valine as substrates. The natural product of the enzyme is not yet known. This chain is Adenylate-forming reductase 03009, found in Coprinopsis cinerea (strain Okayama-7 / 130 / ATCC MYA-4618 / FGSC 9003) (Inky cap fungus).